Reading from the N-terminus, the 160-residue chain is Transcription antitermination protein NusB (160 aa).

This sequence belongs to the NusB family.

Its function is as follows. Involved in transcription antitermination. Required for transcription of ribosomal RNA (rRNA) genes. Binds specifically to the boxA antiterminator sequence of the ribosomal RNA (rrn) operons. In Rhizobium etli (strain CIAT 652), this protein is Transcription antitermination protein NusB.